A 328-amino-acid polypeptide reads, in one-letter code: Probable magnesium transporter NIPA6 (328 aa).

Residues 1-4 (METD) are Extracellular-facing. Residues 5–25 (NGKGLILAVASSVFIGSSFIL) traverse the membrane as a helical segment. Residues 26-51 (KKKGLKRAGAIGTRAGYGGYTYLLEP) lie on the Cytoplasmic side of the membrane. The helical transmembrane segment at 52 to 72 (LWWAGMVTMIVGEAANFVAYI) threads the bilayer. Over 73–76 (YAPA) the chain is Extracellular. A helical membrane pass occupies residues 77-97 (VLVTPLGALSIIISAVLAHFL). The Cytoplasmic portion of the chain corresponds to 98–104 (LKEKLKK). A helical transmembrane segment spans residues 105–125 (MGVLGCVSCIVGSVVIVIHAP). The Extracellular portion of the chain corresponds to 126–142 (KEQTPNSVEEIWNLATQ). The chain crosses the membrane as a helical span at residues 143–163 (PAFLIYVAITMSIVLALILHF). The Cytoplasmic segment spans residues 164–175 (EPLCGQTNILVY). A helical membrane pass occupies residues 176–196 (IGICSLMGALTVMSIKAIGIA). Residues 197 to 209 (IKLTMEGVSQIGY) lie on the Extracellular side of the membrane. Residues 210–230 (PQTWLFVMVAVTCVVTQLIYL) traverse the membrane as a helical segment. Topologically, residues 231-240 (NKALDTFNAA) are cytoplasmic. The chain crosses the membrane as a helical span at residues 241-261 (IVSPVYYVMFTTLTIVASAIM). The Extracellular portion of the chain corresponds to 262–269 (FKDWSGQD). A helical membrane pass occupies residues 270-290 (AASVASELCGFITVLTGTMIL). Over 291 to 328 (HGTREEEQQQASSEHVRWYDSRKSMNEEHLVSLYSPEY) the chain is Cytoplasmic.

Belongs to the NIPA (TC 2.A.7) family. As to quaternary structure, homodimer.

The protein resides in the cell membrane. Its subcellular location is the early endosome. In terms of biological role, acts as a Mg(2+) transporter. Can also transport other divalent cations such as Fe(2+), Sr(2+), Ba(2+), Mn(2+) and Co(2+) but to a much less extent than Mg(2+). The polypeptide is Probable magnesium transporter NIPA6 (Arabidopsis thaliana (Mouse-ear cress)).